The sequence spans 300 residues: ATP synthase gamma chain (300 aa).

This sequence belongs to the ATPase gamma chain family. As to quaternary structure, F-type ATPases have 2 components, CF(1) - the catalytic core - and CF(0) - the membrane proton channel. CF(1) has five subunits: alpha(3), beta(3), gamma(1), delta(1), epsilon(1). CF(0) has three main subunits: a, b and c.

The protein localises to the cell membrane. Produces ATP from ADP in the presence of a proton gradient across the membrane. The gamma chain is believed to be important in regulating ATPase activity and the flow of protons through the CF(0) complex. The protein is ATP synthase gamma chain of Enterococcus hirae (strain ATCC 9790 / DSM 20160 / JCM 8729 / LMG 6399 / NBRC 3181 / NCIMB 6459 / NCDO 1258 / NCTC 12367 / WDCM 00089 / R).